A 95-amino-acid chain; its full sequence is MSLSHDDVRKIAHLARLAVSDADVEAYARSLSSILDFVEQMEAVKTDHVAPMAHPQDTAQRLRDDAVSEADQRERFQSIAPAVEAGLYLVPKVIE.

The protein belongs to the GatC family. As to quaternary structure, heterotrimer of A, B and C subunits.

It catalyses the reaction L-glutamyl-tRNA(Gln) + L-glutamine + ATP + H2O = L-glutaminyl-tRNA(Gln) + L-glutamate + ADP + phosphate + H(+). The catalysed reaction is L-aspartyl-tRNA(Asn) + L-glutamine + ATP + H2O = L-asparaginyl-tRNA(Asn) + L-glutamate + ADP + phosphate + 2 H(+). Its function is as follows. Allows the formation of correctly charged Asn-tRNA(Asn) or Gln-tRNA(Gln) through the transamidation of misacylated Asp-tRNA(Asn) or Glu-tRNA(Gln) in organisms which lack either or both of asparaginyl-tRNA or glutaminyl-tRNA synthetases. The reaction takes place in the presence of glutamine and ATP through an activated phospho-Asp-tRNA(Asn) or phospho-Glu-tRNA(Gln). The protein is Aspartyl/glutamyl-tRNA(Asn/Gln) amidotransferase subunit C of Thioalkalivibrio sulfidiphilus (strain HL-EbGR7).